We begin with the raw amino-acid sequence, 208 residues long: Sodium/potassium-transporting ATPase subunit beta-1-interacting protein 2 (208 aa).

The next 4 membrane-spanning stretches (helical) occupy residues 1 to 23 (MGYC…CVLE), 35 to 55 (APIL…FGTI), 62 to 82 (ITGY…VICF), and 153 to 173 (LQIV…KCIT).

The protein belongs to the NKAIN family. Interacts with ATP1B1. In terms of tissue distribution, expressed in fetal brain. Weakly expressed in adult brain and thymus. Not expressed in any other normal tissue examined.

Its subcellular location is the cell membrane. This is Sodium/potassium-transporting ATPase subunit beta-1-interacting protein 2 (NKAIN2) from Homo sapiens (Human).